A 174-amino-acid polypeptide reads, in one-letter code: Glutaredoxin-C5, chloroplastic (174 aa).

Residues 1–51 (MAVTAFNTLKLVSSSLDPIPSVSCSSYSFSLIYVGSPYKRCLKQSCSVRAM) constitute a chloroplast transit peptide. Threonine 52 is modified (N-acetylthreonine). Residue cysteine 90 is modified to S-glutathionyl cysteine; partial. A disulfide bond links cysteine 90 and cysteine 93. In terms of domain architecture, Glutaredoxin spans 93–171 (CTEVKTLFKR…LMLAEANGKN (79 aa)). Residues valine 135, cysteine 148, and threonine 149 each coordinate glutathione. Position 148 is an S-glutathionyl cysteine; partial (cysteine 148).

It belongs to the glutaredoxin family. CPYC subfamily. In terms of assembly, monomeric apoprotein and homodimeric holoprotein containing a [2Fe-2S] cluster. No in vitro interactions with SUFE1, BOLA1, BOLA2 or BOLA4. In terms of processing, glutathionylated.

It is found in the plastid. It localises to the chloroplast. Has a glutathione-disulfide oxidoreductase activity in the presence of NADPH and glutathione reductase. Reduces low molecular weight disulfides and proteins. Can assemble a [2Fe-2S] cluster, but cannot transfer it to an apoferredoxin. This Arabidopsis thaliana (Mouse-ear cress) protein is Glutaredoxin-C5, chloroplastic.